Reading from the N-terminus, the 584-residue chain is (+)-larreatricin hydroxylase, chloroplastic (584 aa).

The N-terminal 32 residues, 1–32 (MASLSSQSKLLATPYSFPYHTKPSRVSLRRVS), are a transit peptide targeting the chloroplast. The transit peptide at 33 to 79 (CKASNDNKDKPNDQEKTFSIDRRNMLIGLGGLYGASNVFPSNQSTLA) directs the protein to the thylakoid. 2 disulfide bridges follow: C91–C106 and C105–C168. Residues H167, H188, H197, H319, H323, and H353 each contribute to the Cu cation site. The 2'-(S-cysteinyl)-histidine (Cys-His) cross-link spans 171 to 188 (CNGAYDQVGFPDVNIQVH). A propeptide spans 432–584 (RLRSKATTTT…KIEFVRDEED (153 aa)) (removed in mature form).

The protein belongs to the tyrosinase family. Requires Cu(2+) as cofactor.

The protein resides in the plastid. It localises to the chloroplast thylakoid lumen. The catalysed reaction is (+)-larreatricin + AH2 + O2 = (+)-3'-hydroxylarreatricin + A + H2O. Enantio-specific polyphenol oxidase involved in aromatic ring hydroxylation. Involved in the biosynthesis of the creosote bush 8-8' linked lignans. Has a strong preference for the 3' position of (+)-larreatricin. The protein is (+)-larreatricin hydroxylase, chloroplastic of Larrea tridentata (Creosote bush).